A 63-amino-acid chain; its full sequence is Large ribosomal subunit protein uL29 (63 aa).

It belongs to the universal ribosomal protein uL29 family.

The chain is Large ribosomal subunit protein uL29 from Shigella dysenteriae serotype 1 (strain Sd197).